The chain runs to 548 residues: Alpha-humulene synthase (548 aa).

Asp-302, Asp-306, and Glu-453 together coordinate Mg(2+). Residues 302–306 (DDIYD) carry the DDXXD motif motif.

It belongs to the terpene synthase family. As to expression, mostly expressed in rhizomes.

The enzyme catalyses (2E,6E)-farnesyl diphosphate = alpha-humulene + diphosphate. Its function is as follows. Catalyzes the formation of alpha-humulene in the first step of zerumbone biosynthesis, a highly promising multi-anticancer agent. Also mediates formation of beta-caryophyllene at a much lower level. The chain is Alpha-humulene synthase (ZSS1) from Zingiber zerumbet (Shampoo ginger).